The primary structure comprises 503 residues: ATP synthase subunit alpha, chloroplastic (503 aa).

170–177 (GDRQTGKT) lines the ATP pocket.

The protein belongs to the ATPase alpha/beta chains family. F-type ATPases have 2 components, CF(1) - the catalytic core - and CF(0) - the membrane proton channel. CF(1) has five subunits: alpha(3), beta(3), gamma(1), delta(1), epsilon(1). CF(0) has four main subunits: a, b, b' and c.

The protein localises to the plastid. The protein resides in the chloroplast thylakoid membrane. It carries out the reaction ATP + H2O + 4 H(+)(in) = ADP + phosphate + 5 H(+)(out). In terms of biological role, produces ATP from ADP in the presence of a proton gradient across the membrane. The alpha chain is a regulatory subunit. This Thalassiosira pseudonana (Marine diatom) protein is ATP synthase subunit alpha, chloroplastic.